We begin with the raw amino-acid sequence, 134 residues long: MLLVLLSVVLLALSSAQSTDNDVNYEDFTFTIPDVEDSSQRPDQGPQRPPPEGLLPRPPGDSGNQDDGPQQRPPKPGGHHRHPPPPPFQNQQRPPRRGHRQLSLPRFPSVSLQEASSFFQRDRPARHPQEQPLW.

The first 16 residues, 1–16 (MLLVLLSVVLLALSSA), serve as a signal peptide directing secretion. The interval 28 to 134 (FTFTIPDVED…ARHPQEQPLW (107 aa)) is disordered. Over residues 47 to 59 (QRPPPEGLLPRPP) the composition is skewed to pro residues. Positions 110–119 (VSLQEASSFF) are enriched in polar residues. Residues 120–134 (QRDRPARHPQEQPLW) show a composition bias toward basic and acidic residues.

Abundantly expressed in lacrimal gland where it is found in the acinar cells but not in the intralobular ducts. Also found in the submandibular gland, the parotid and sublingual glands.

It localises to the secreted. The polypeptide is Proline-rich protein 4 (PRR4) (Homo sapiens (Human)).